A 305-amino-acid chain; its full sequence is Serine/threonine-protein phosphatase PP-X isozyme 2 (305 aa).

4 residues coordinate Mn(2+): Asp-51, His-53, Asp-79, and Asn-111. The active-site Proton donor is His-112. The Mn(2+) site is built by His-161 and His-236.

Belongs to the PPP phosphatase family. PP-4 (PP-X) subfamily. Mn(2+) serves as cofactor. Ubiquitous, mostly expressed in root mersitems, flowers, and vascular tissues.

It localises to the plastid stroma. The enzyme catalyses O-phospho-L-seryl-[protein] + H2O = L-seryl-[protein] + phosphate. It catalyses the reaction O-phospho-L-threonyl-[protein] + H2O = L-threonyl-[protein] + phosphate. This Arabidopsis thaliana (Mouse-ear cress) protein is Serine/threonine-protein phosphatase PP-X isozyme 2 (PPX2).